Reading from the N-terminus, the 333-residue chain is Complement C1q and tumor necrosis factor-related protein 9A (333 aa).

The signal sequence occupies residues 1–19 (MRIWWLLLAIEICTGNINS). Collagen-like domains lie at 24 to 82 (RQGH…DGKV), 95 to 154 (GSPG…PGPM), and 155 to 191 (GPIG…GEKG). A disordered region spans residues 24-188 (RQGHPGIPGN…GIRGWKGDRG (165 aa)). Residues 26-40 (GHPGIPGNPGHNGLP) are compositionally biased toward low complexity. A 4-hydroxyproline mark is found at Pro31, Pro34, and Pro40. Residues 42–57 (RDGRDGAKGDKGDAGE) are compositionally biased toward basic and acidic residues. Residues Pro58, Pro61, and Pro64 each carry the 4-hydroxyproline modification. The span at 69–88 (TSGEKGERGADGKVEAKGIK) shows a compositional bias: basic and acidic residues. 5-hydroxylysine occurs at positions 73 and 127. 2 O-linked (Gal...) hydroxylysine glycosylation sites follow: Lys73 and Lys127. 3 positions are modified to 4-hydroxyproline: Pro151, Pro160, and Pro175. Residues 197-333 (LVLPKSAFTV…FTGFLLFSSP (137 aa)) form the C1q domain.

In terms of assembly, multimers (predominantly trimers). Interacts with ADIPOQ via the C1q domain to form a heterotrimeric complex. Interacts with CTRP9B. Forms heterotrimers and heterooligomeric complexes with CTRP9B. In terms of tissue distribution, expressed predominantly in adipose tissue.

The protein resides in the secreted. Probable adipokine. Activates AMPK, AKT, and p44/42 MAPK signaling pathways. This is Complement C1q and tumor necrosis factor-related protein 9A (C1QTNF9) from Homo sapiens (Human).